Reading from the N-terminus, the 1637-residue chain is Glutamate rich 3 (1637 aa).

Disordered regions lie at residues 145 to 192 (PLTL…GSLL), 408 to 453 (PSST…KESC), 478 to 814 (EWKG…QDAG), 1111 to 1194 (VGTS…SPRE), 1238 to 1445 (IEKV…SGER), and 1457 to 1637 (KAEN…RETA). Polar residues predominate over residues 169–185 (LLSSRQTRNGSKITSGS). 3 stretches are compositionally biased toward basic and acidic residues: residues 416–426 (EKITEKKEEPP), 443–452 (KRNEMERKES), and 478–487 (EWKGKSGRDV). Positions 500 to 523 (YEEDFEVDDEKQDEKVDEDEDQAD) are enriched in acidic residues. The span at 534–557 (TESEKDNRNPEKKIETSSEKAHDS) shows a compositional bias: basic and acidic residues. The span at 558–572 (ENEDTGCSDSEEDDR) shows a compositional bias: acidic residues. Composition is skewed to low complexity over residues 579-590 (SSISSRSHPYSS) and 608-617 (EEGSSRSSSS). Basic and acidic residues-rich tracts occupy residues 619-638 (DLRENDDPGKPHFPIEKYLE), 677-693 (ESEHKEPRRVASSEVRA), 769-802 (QEMHTLKEEAMKKDESSQPEDTDAHAGVREESGM), 1115-1130 (EVKEAEREVGSPKTDG), 1264-1307 (LKTE…KDVE), 1319-1329 (KLLEDPPKERA), 1342-1357 (SPKESEATATEHKGGE), and 1402-1412 (RCEEWAAKELD). A compositionally biased stretch (polar residues) spans 1476 to 1487 (VTGSLTGQNWNM). 3 stretches are compositionally biased toward basic and acidic residues: residues 1550–1568 (AEERTGTEDMAPRTEKVAV), 1589–1599 (AQDREGGETKA), and 1614–1637 (GKDEEHQSGAAEEFRESVSQRETA).

It is found in the cell projection. Its subcellular location is the cilium. The protein localises to the cytoplasm. Its function is as follows. Component of the primary cilium that controls cilium formation and length. May function within retrograde intraflagellar transport (IFT)-associated pathways to remove signaling proteins from primary cilia. Also involved in neuronal vesicle biogenesis and neurotransmitter vesicular function. The sequence is that of Glutamate rich 3 from Mus musculus (Mouse).